The primary structure comprises 314 residues: Coiled-coil domain-containing protein 69 (314 aa).

The segment covering 1-12 has biased composition (low complexity); that stretch reads MGCHNSKVCGQV. 2 disordered regions span residues 1–43 and 114–133; these read MGCH…HSSE and RSVSEQHQSETEELQRLHSE. Glycine 2 carries N-myristoyl glycine lipidation. Composition is skewed to basic and acidic residues over residues 20–43 and 120–133; these read KAQEGEKRTKDIKLQDGRGTHSSE and HQSETEELQRLHSE. Positions 106–291 form a coiled coil; that stretch reads NDLHEQQMRS…QEKEELLFKL (186 aa).

The protein belongs to the CCDC69 family.

Its subcellular location is the cytoplasm. It localises to the cytoskeleton. It is found in the spindle. The protein resides in the midbody. In terms of biological role, may act as a scaffold to regulate the recruitment and assembly of spindle midzone components. This Danio rerio (Zebrafish) protein is Coiled-coil domain-containing protein 69 (ccdc69).